We begin with the raw amino-acid sequence, 156 residues long: MIKEFNTQTTLNVGLEALWAAQSKDITLVVPKVLPNIVKDVQVIEGDGGVGTKLIFNFLPGIAPVNYQREVITEYDELSHTIGLQVVEGGYLNQGLSYYKTTFQFSAISENKTLVNVKISYDHESELIEEKVKPTKTSESTLFYLGQLEKFLLNGA.

Residues Gln-22, Gln-68, and Thr-141 each coordinate gibberellin A3.

It belongs to the BetVI family.

Its function is as follows. Binds gibberellin A3 (GA3) in vitro. The polypeptide is Phytohormone-binding protein (Medicago truncatula (Barrel medic)).